The following is a 1761-amino-acid chain: Probable serine/threonine-protein kinase DDB_G0282963 (1761 aa).

12 disordered regions span residues 18-47 (PQQQQIPQQQEQQQQQQQQQQQQQQQQQQQ), 60-269 (QQQQ…SNKL), 322-458 (SISN…SDFN), 545-717 (QNSS…KSSQ), 749-783 (LKNSPFPPSSPILSPQTDDPNNNNNNNNSNTTISQ), 798-830 (AFYNSGSNNNNNNNNNNNNNNNNNNNNTNSTSA), 842-956 (TTQI…KSVF), 972-997 (NSHHHHNSGNNSSNSNNNNNDDEVPT), 1081-1151 (ITSA…CNVN), 1179-1305 (KNNC…PSKQ), 1318-1343 (ALDSTNNNNNNNNDTDSTSSNMGTPT), and 1355-1459 (QHSR…ECWK). 4 stretches are compositionally biased toward low complexity: residues 19–47 (QQQQIPQQQEQQQQQQQQQQQQQQQQQQQ), 60–85 (QQQQEQQNNNNNINDNINGNNNSNEI), 92–105 (NITNNNGTSIIISL), and 112–237 (ALNS…NNNN). The segment covering 238-256 (KQMTPPTFKNNLQVKHQPQ) has biased composition (polar residues). 4 stretches are compositionally biased toward low complexity: residues 257–269 (SSSGGSIGGSNKL), 322–341 (SISNTTNETTTTTTTTTNTT), 348–451 (GSIG…NNGV), and 546–572 (NSSLNINNNNNSSNNNNINNNNNNNNI). The span at 573–582 (MAGSTSSVIY) shows a compositional bias: polar residues. Low complexity predominate over residues 591 to 627 (NENNNNNINNDNTVCNINNNNNSNNNKSNNSNNSNNS). The segment covering 633–643 (SSDEEPETDSD) has biased composition (acidic residues). Low complexity-rich tracts occupy residues 674 to 697 (NNTNTNTNTHNTYNNNKNNNNNNT), 759 to 778 (PILSPQTDDPNNNNNNNNSN), 805 to 824 (NNNNNNNNNNNNNNNNNNNN), 847 to 885 (TSDIDTSNSDNNNNNNNNNTSDNNFNDYNNDYNNDYNNY), 902 to 956 (TKMS…KSVF), 979 to 990 (SGNNSSNSNNNN), 1081 to 1149 (ITSA…CTCN), and 1180 to 1262 (NNCT…SNNN). The span at 1263 to 1273 (NHHHHHHHHHN) shows a compositional bias: basic residues. 4 stretches are compositionally biased toward low complexity: residues 1288 to 1303 (SSSSSPWSSPALSSPS), 1320 to 1338 (DSTNNNNNNNNDTDSTSSN), 1359 to 1386 (NNSSNNQNNNNINNNNNNNNNNNNNNNN), and 1393 to 1454 (SNST…MNSN). The Protein kinase domain occupies 1476–1744 (LFLIKKIGAG…AITSLYDDYI (269 aa)). ATP contacts are provided by residues 1482-1490 (IGAGSFSKV) and K1503. The active-site Proton acceptor is D1597.

The protein belongs to the protein kinase superfamily. TKL Ser/Thr protein kinase family.

It catalyses the reaction L-seryl-[protein] + ATP = O-phospho-L-seryl-[protein] + ADP + H(+). The catalysed reaction is L-threonyl-[protein] + ATP = O-phospho-L-threonyl-[protein] + ADP + H(+). The sequence is that of Probable serine/threonine-protein kinase DDB_G0282963 from Dictyostelium discoideum (Social amoeba).